The following is a 270-amino-acid chain: 3-phenylpropionate-dihydrodiol/cinnamic acid-dihydrodiol dehydrogenase (270 aa).

NAD(+) is bound at residue 10 to 34; that stretch reads FITGGGSGLGLALVERFIEEGAQVA. Substrate is bound at residue serine 143. The active-site Proton acceptor is the tyrosine 156.

It belongs to the short-chain dehydrogenases/reductases (SDR) family.

It catalyses the reaction 3-(cis-5,6-dihydroxycyclohexa-1,3-dien-1-yl)propanoate + NAD(+) = 3-(2,3-dihydroxyphenyl)propanoate + NADH + H(+). The enzyme catalyses (2E)-3-(cis-5,6-dihydroxycyclohexa-1,3-dien-1-yl)prop-2-enoate + NAD(+) = (2E)-3-(2,3-dihydroxyphenyl)prop-2-enoate + NADH + H(+). Its pathway is aromatic compound metabolism; 3-phenylpropanoate degradation. Converts 3-phenylpropionate-dihydrodiol (PP-dihydrodiol) and cinnamic acid-dihydrodiol (CI-dihydrodiol) into 3-(2,3-dihydroxylphenyl)propanoic acid (DHPP) and 2,3-dihydroxicinnamic acid (DHCI), respectively. The polypeptide is 3-phenylpropionate-dihydrodiol/cinnamic acid-dihydrodiol dehydrogenase (Escherichia coli O7:K1 (strain IAI39 / ExPEC)).